Reading from the N-terminus, the 1942-residue chain is Myosin-2 (1942 aa).

The Myosin N-terminal SH3-like domain maps to 33–82 (DAKTSVFVAEPKESFVKGTIQSKDAGKVTVKTEAGATLTVKEDQIFPMNP). A phosphothreonine mark is found at Thr64 and Thr69. A Myosin motor domain is found at 86–785 (DKIEDMAMMT…LLGLLEEMRD (700 aa)). An ATP-binding site is contributed by 179–186 (GESGAGKT). Residue Tyr389 is modified to Phosphotyrosine. Thr419 carries the post-translational modification Phosphothreonine. At Ser625 the chain carries Phosphoserine. The tract at residues 662-684 (LNKLMTNLRSTHPHFVRCIIPNE) is actin-binding. A Pros-methylhistidine modification is found at His760. The 30-residue stretch at 788 to 817 (LAQLITRTQAMCRGFLARVEYQKMVERRES) folds into the IQ domain. A coiled-coil region spans residues 849 to 1930 (SAETEKEMAT…ESQVNKLRVK (1082 aa)). 2 positions are modified to phosphoserine: Ser1095 and Ser1099. Residues 1130-1175 (EAERASRAKAEKQRSDLSRELEEISERLEEAGGATSAQIEMNKKRE) are disordered. Residues 1131-1159 (AERASRAKAEKQRSDLSRELEEISERLEE) are compositionally biased toward basic and acidic residues. Residues Ser1165 and Ser1240 each carry the phosphoserine modification. A Phosphothreonine modification is found at Thr1244. Phosphoserine is present on Ser1246. Thr1258 is modified (phosphothreonine). Ser1264 is subject to Phosphoserine. A Phosphothreonine modification is found at Thr1289. Phosphoserine is present on residues Ser1291, Ser1295, Ser1306, and Ser1309. Position 1467 is a phosphotyrosine (Tyr1467). The residue at position 1470 (Thr1470) is a Phosphothreonine. Ser1477 carries the post-translational modification Phosphoserine. A Phosphotyrosine modification is found at Tyr1495. Phosphoserine is present on Ser1498. Thr1504 is subject to Phosphothreonine. Ser1517 bears the Phosphoserine mark. At Thr1520 the chain carries Phosphothreonine. Phosphoserine occurs at positions 1557, 1577, 1603, 1606, 1717, and 1729. Phosphothreonine is present on residues Thr1733 and Thr1739. Phosphoserine is present on Ser1742.

This sequence belongs to the TRAFAC class myosin-kinesin ATPase superfamily. Myosin family. Muscle myosin is a hexameric protein that consists of 2 heavy chain subunits (MHC), 2 alkali light chain subunits (MLC) and 2 regulatory light chain subunits (MLC-2). Interacts with GCSAM. As to expression, expressed in type 2a myofibers in the tibialis anterior and soleus muscles (at protein level).

The protein resides in the cytoplasm. It is found in the myofibril. Functionally, myosins are actin-based motor molecules with ATPase activity essential for muscle contraction. The protein is Myosin-2 of Mus musculus (Mouse).